Reading from the N-terminus, the 448-residue chain is MSRLFGTDGVRGIANTELTAELAYNLGRAGAYVLTEGTHKPKILVAKDTRISGDMLEAALVAGILSVGAEAVCLGVVPTPAVAHLTRVYGADAGVMISASHNPVEYNGIKFFDDKGYKLSDDLEDEIQRVIESGFENVPSPTGANLGREIIEKAALEDYISFAKDTIGISLEGLRVALDCANGASHEAAVRAFRELGAEIFVINDNPDGTNINENCGSTHPEELMEYVVKKKCHMGFAFDGDADRCLAVDEQGNLVDGDFILTICAKYLKELGRLKDDTLVVTVMSNLGLMIACKNEKINTAVTKVGDRYVLEEMLAKGYSLGGEQSGHIIFLDHNSTGDGLVTALQVASIVKRTGKSLFELKNVMKVLPQVLVNAKVPNNMKNIHEEDEEIIAEIKKMEAALDGCGRVLIRPSGTEPLVRVMLEGENQAEIDEMAHNLAKMIEAKCN.

Ser-100 serves as the catalytic Phosphoserine intermediate. Mg(2+) contacts are provided by Ser-100, Asp-240, Asp-242, and Asp-244. Phosphoserine is present on Ser-100.

Belongs to the phosphohexose mutase family. It depends on Mg(2+) as a cofactor. In terms of processing, activated by phosphorylation.

It catalyses the reaction alpha-D-glucosamine 1-phosphate = D-glucosamine 6-phosphate. Catalyzes the conversion of glucosamine-6-phosphate to glucosamine-1-phosphate. The polypeptide is Phosphoglucosamine mutase (Clostridium perfringens (strain ATCC 13124 / DSM 756 / JCM 1290 / NCIMB 6125 / NCTC 8237 / Type A)).